The primary structure comprises 410 residues: LL-diaminopimelate aminotransferase (410 aa).

2 residues coordinate substrate: Tyr-15 and Gly-42. Residues Tyr-72, 108–109 (SK), Tyr-132, Asn-187, Tyr-218, and 246–248 (SFS) contribute to the pyridoxal 5'-phosphate site. Substrate-binding residues include Lys-109, Tyr-132, and Asn-187. N6-(pyridoxal phosphate)lysine is present on Lys-249. 2 residues coordinate pyridoxal 5'-phosphate: Arg-257 and Asn-292. Substrate is bound by residues Asn-292 and Arg-388.

Belongs to the class-I pyridoxal-phosphate-dependent aminotransferase family. LL-diaminopimelate aminotransferase subfamily. Homodimer. Requires pyridoxal 5'-phosphate as cofactor.

It carries out the reaction (2S,6S)-2,6-diaminopimelate + 2-oxoglutarate = (S)-2,3,4,5-tetrahydrodipicolinate + L-glutamate + H2O + H(+). It functions in the pathway amino-acid biosynthesis; L-lysine biosynthesis via DAP pathway; LL-2,6-diaminopimelate from (S)-tetrahydrodipicolinate (aminotransferase route): step 1/1. Involved in the synthesis of meso-diaminopimelate (m-DAP or DL-DAP), required for both lysine and peptidoglycan biosynthesis. Catalyzes the direct conversion of tetrahydrodipicolinate to LL-diaminopimelate. In Syntrophotalea carbinolica (strain DSM 2380 / NBRC 103641 / GraBd1) (Pelobacter carbinolicus), this protein is LL-diaminopimelate aminotransferase.